A 124-amino-acid chain; its full sequence is Large ribosomal subunit protein bL19 (124 aa).

It belongs to the bacterial ribosomal protein bL19 family.

Functionally, this protein is located at the 30S-50S ribosomal subunit interface and may play a role in the structure and function of the aminoacyl-tRNA binding site. This is Large ribosomal subunit protein bL19 from Orientia tsutsugamushi (strain Boryong) (Rickettsia tsutsugamushi).